The primary structure comprises 346 residues: Iron uptake protein A2 (346 aa).

Residues 1–31 (MTTKISRRTFFVGGTALTALVVANLPRRASA) constitute a signal peptide (tat-type signal). H43, Y44, Y169, Y225, and Y226 together coordinate Fe cation.

It belongs to the bacterial solute-binding protein 1 family. In terms of processing, predicted to be exported by the Tat system. The position of the signal peptide cleavage has not been experimentally proven.

It is found in the cellular thylakoid membrane. The protein localises to the periplasm. Functionally, probably part of a periplasmic ABC transporter complex futA1A2BC (TC 3.A.1.10.2) involved in Fe(3+) ion import (ferric iron). This protein and futA1 (slr1295) are subunit proteins that have redundant or overlapping substrate-binding functions. The differing subcellular locations of futA1 (predominantly thylakoid lumen) and futA2 (predominantly periplasmic) suggest they may fulfill different roles. In terms of biological role, plays an important role in protecting the acceptor side of photosystem II (PSII) against oxidative damage, especially under iron-limiting growth conditions. Its function is as follows. Plays an undefined role in copper supply to thylakoid proteins. This Synechocystis sp. (strain ATCC 27184 / PCC 6803 / Kazusa) protein is Iron uptake protein A2 (futA2).